The primary structure comprises 224 residues: Phosphoglycolate phosphatase (224 aa).

The active-site Nucleophile is the Asp-11. Mg(2+) is bound by residues Asp-11, Asp-13, and Asp-177.

Belongs to the HAD-like hydrolase superfamily. CbbY/CbbZ/Gph/YieH family. Mg(2+) serves as cofactor.

The catalysed reaction is 2-phosphoglycolate + H2O = glycolate + phosphate. It participates in organic acid metabolism; glycolate biosynthesis; glycolate from 2-phosphoglycolate: step 1/1. Functionally, specifically catalyzes the dephosphorylation of 2-phosphoglycolate. Is involved in the dissimilation of the intracellular 2-phosphoglycolate formed during the DNA repair of 3'-phosphoglycolate ends, a major class of DNA lesions induced by oxidative stress. The chain is Phosphoglycolate phosphatase from Haemophilus influenzae (strain ATCC 51907 / DSM 11121 / KW20 / Rd).